We begin with the raw amino-acid sequence, 211 residues long: uncharacterized protein (211 aa).

This is an uncharacterized protein from Homo sapiens (Human).